The sequence spans 288 residues: Protease HtpX (288 aa).

Transmembrane regions (helical) follow at residues 5-25 (IALF…VMSL) and 34-54 (SGLL…SLLL). Histidine 140 contacts Zn(2+). The active site involves glutamate 141. Histidine 144 is a binding site for Zn(2+). 2 helical membrane passes run 155 to 175 (LLQG…GGII) and 190 to 210 (FAYF…ATMI). Residue glutamate 219 participates in Zn(2+) binding.

This sequence belongs to the peptidase M48B family. Requires Zn(2+) as cofactor.

It is found in the cell inner membrane. The protein is Protease HtpX of Stenotrophomonas maltophilia (strain R551-3).